The chain runs to 422 residues: Solute carrier family 35 member D3 (422 aa).

Helical transmembrane passes span 9 to 29 (VLGISVAIAHGVFSGSLNILL), 38 to 58 (FSFLTLVQCLTSSTAALSLEL), 64 to 84 (LIAVPPFGLSLARSFAGVAVL), 103 to 123 (MYVVFKRCLPLVTMLIGVLVL), 131 to 151 (GVLAAVLITTCGAALAGAGDL), 155 to 175 (PIGYVTGVLAVLVHAAYLVLI), 187 to 207 (LTAQYVIAVSATPLLVICSFA), 224 to 244 (AMVSIFVACILIGCAMNFTTL), 257 to 277 (FVGVVKSIATITVGMVAFSDV), and 280 to 300 (TSLFIAGVVVNTLGSIIYCVA). A disordered region spans residues 339 to 365 (AKSGNSEPESAEGAGDSVQQGGQESRG). Over residues 355–364 (SVQQGGQESR) the composition is skewed to polar residues.

This sequence belongs to the TPT transporter family. SLC35D subfamily. As to quaternary structure, could interact with ATG14, BECN1 and PIK3C3 that form the PI3KC3-C1/AIC/autophagy initiation complex; enhancing the formation of the AIC and promoting autophagy. In terms of tissue distribution, expressed in brain. Expressed in subsets of dopaminergic neurons. Expressed in maturing megakaryocytes.

It localises to the cytoplasmic vesicle. Its subcellular location is the secretory vesicle. It is found in the synaptic vesicle membrane. The protein localises to the early endosome membrane. The protein resides in the endoplasmic reticulum membrane. The catalysed reaction is UDP-alpha-D-glucose(in) = UDP-alpha-D-glucose(out). With respect to regulation, inhibited by proton uncouplers that directly abolish the proton electrochemical gradient. In terms of biological role, probable UDP-glucose transmembrane transporter involved in UDP-glucose transport from the cytosol to the lumen of synaptic vesicles. It is involved in platelet dense granules maturation. Functionally, alternatively, could function as a molecular adapter enhancing the formation of the PI3KC3-C1/AIC/autophagy initiation complex to promote autophagy in dopaminergic neurons. Could also regulate the plasma membrane localization of the D(1A) dopamine receptor/DRD1 and dopamine signaling. The sequence is that of Solute carrier family 35 member D3 from Mus musculus (Mouse).